Reading from the N-terminus, the 190-residue chain is Threonylcarbamoyl-AMP synthase (190 aa).

The region spanning 7-190 is the YrdC-like domain; it reads SQDVASLVIA…ALSGELIRQG (184 aa).

This sequence belongs to the SUA5 family. TsaC subfamily.

It is found in the cytoplasm. The enzyme catalyses L-threonine + hydrogencarbonate + ATP = L-threonylcarbamoyladenylate + diphosphate + H2O. In terms of biological role, required for the formation of a threonylcarbamoyl group on adenosine at position 37 (t(6)A37) in tRNAs that read codons beginning with adenine. Catalyzes the conversion of L-threonine, HCO(3)(-)/CO(2) and ATP to give threonylcarbamoyl-AMP (TC-AMP) as the acyladenylate intermediate, with the release of diphosphate. The protein is Threonylcarbamoyl-AMP synthase of Sodalis glossinidius (strain morsitans).